The primary structure comprises 339 residues: Glyceraldehyde-3-phosphate dehydrogenase (339 aa).

Residues 12-13 (RI), aspartate 39, arginine 84, and serine 127 each bind NAD(+). Residues 157–159 (SCT), threonine 188, arginine 203, 216–217 (TG), and arginine 239 contribute to the D-glyceraldehyde 3-phosphate site. The active-site Nucleophile is cysteine 158. Residue asparagine 320 coordinates NAD(+).

This sequence belongs to the glyceraldehyde-3-phosphate dehydrogenase family. Homotetramer.

Its subcellular location is the cytoplasm. It catalyses the reaction D-glyceraldehyde 3-phosphate + phosphate + NAD(+) = (2R)-3-phospho-glyceroyl phosphate + NADH + H(+). It functions in the pathway carbohydrate degradation; glycolysis; pyruvate from D-glyceraldehyde 3-phosphate: step 1/5. Functionally, catalyzes the oxidative phosphorylation of glyceraldehyde 3-phosphate (G3P) to 1,3-bisphosphoglycerate (BPG) using the cofactor NAD. The first reaction step involves the formation of a hemiacetal intermediate between G3P and a cysteine residue, and this hemiacetal intermediate is then oxidized to a thioester, with concomitant reduction of NAD to NADH. The reduced NADH is then exchanged with the second NAD, and the thioester is attacked by a nucleophilic inorganic phosphate to produce BPG. This is Glyceraldehyde-3-phosphate dehydrogenase (gapA) from Mycobacterium leprae (strain TN).